Here is a 215-residue protein sequence, read N- to C-terminus: Protein Syd (215 aa).

This sequence belongs to the Syd family.

Its subcellular location is the cell inner membrane. Its function is as follows. Interacts with the SecY protein in vivo. May bind preferentially to an uncomplexed state of SecY, thus functioning either as a chelating agent for excess SecY in the cell or as a regulatory factor that negatively controls the translocase function. The chain is Protein Syd from Shewanella piezotolerans (strain WP3 / JCM 13877).